The primary structure comprises 681 residues: MAQFSDIDKLAVSTLRLLSVDQVESAQSGHPGAPLGLAPVAHVIFKQLRCNPNNEHWINRDRFVLSNGHSCALLYSMLHLLGYDYSIEDLRQFRQVNSRTPGHPEFHSAGVEITSGPLGQGISNAVGMAIAQANFAATYNEDGFPISDSYTFAIVGDGCLQEGVSSETSSLAGHLQLGNLITFYDSNSISIDGKTSYSFDEDVLKRYEAYGWEVMEVDKGDDDMESISSALEKAKLSKDKPTIIKVTTTIGFGSLQQGTAGVHGSALKADDVKQLKKRWGFDPNKSFVVPQEVYDYYKKTVVEPGQKLNEEWDRMFEEYKTKFPEKGKELQRRLNGELPEGWEKHLPKFTPDDDALATRKTSQQVLTNMVQVLPELIGGSADLTPSNLTRWEGAVDFQPPITQLGNYAGRYIRYGVREHGMGAIMNGISAFGANYKPYGGTFLNFVSYAAGAVRLAALSGNPVIWVATHDSIGLGEDGPTHQPIETLAHLRAIPNMHVWRPADGNETSAAYYSAIKSGRTPSVVALSRQNLPQLEHSSFEKALKGGYVIHDVENPDIILVSTGSEVSISIDAAKKLYDTKKIKARVVSLPDFYTFDRQSEEYRFSVLPDGVPIMSFEVLATSSWGKYAHQSFGLDEFGRSGKGPEIYKLFDFTADGVASRAEKTINYYKGKQLLSPMGRAF.

Histidine 30 contacts substrate. Residues histidine 69 and 116–118 each bind thiamine diphosphate; that span reads GPL. A Mg(2+)-binding site is contributed by aspartate 157. Thiamine diphosphate is bound by residues glycine 158 and asparagine 187. 2 residues coordinate Mg(2+): asparagine 187 and isoleucine 189. The substrate site is built by histidine 263, arginine 359, and serine 386. Residue histidine 263 coordinates thiamine diphosphate. Thiamine diphosphate-binding residues include glutamate 418 and phenylalanine 445. Residue glutamate 418 is the Proton donor of the active site. Substrate is bound by residues histidine 469, aspartate 477, and arginine 528.

This sequence belongs to the transketolase family. In terms of assembly, homodimer. It depends on Mg(2+) as a cofactor. Requires Ca(2+) as cofactor. The cofactor is Mn(2+). Co(2+) is required as a cofactor. Thiamine diphosphate serves as cofactor.

The enzyme catalyses D-sedoheptulose 7-phosphate + D-glyceraldehyde 3-phosphate = aldehydo-D-ribose 5-phosphate + D-xylulose 5-phosphate. Catalyzes the transfer of a two-carbon ketol group from a ketose donor to an aldose acceptor, via a covalent intermediate with the cofactor thiamine pyrophosphate. This is Transketolase 2 (TKL2) from Saccharomyces cerevisiae (strain ATCC 204508 / S288c) (Baker's yeast).